The sequence spans 447 residues: tRNA modification GTPase MnmE (447 aa).

Residues arginine 22, glutamate 81, and lysine 121 each contribute to the (6S)-5-formyl-5,6,7,8-tetrahydrofolate site. In terms of domain architecture, TrmE-type G spans 217–373; that stretch reads GIVLAITGET…LMSEIVSYAE (157 aa). Asparagine 227 contributes to the K(+) binding site. GTP is bound by residues 227 to 232, 246 to 252, and 271 to 274; these read NTGKSS, SDIPGTT, and DTAG. Serine 231 is a Mg(2+) binding site. The K(+) site is built by serine 246, isoleucine 248, and threonine 251. Residue threonine 252 coordinates Mg(2+). Position 447 (lysine 447) interacts with (6S)-5-formyl-5,6,7,8-tetrahydrofolate.

Belongs to the TRAFAC class TrmE-Era-EngA-EngB-Septin-like GTPase superfamily. TrmE GTPase family. Homodimer. Heterotetramer of two MnmE and two MnmG subunits. K(+) is required as a cofactor.

It is found in the cytoplasm. In terms of biological role, exhibits a very high intrinsic GTPase hydrolysis rate. Involved in the addition of a carboxymethylaminomethyl (cmnm) group at the wobble position (U34) of certain tRNAs, forming tRNA-cmnm(5)s(2)U34. In Orientia tsutsugamushi (strain Boryong) (Rickettsia tsutsugamushi), this protein is tRNA modification GTPase MnmE.